The primary structure comprises 429 residues: Putative protease Do-like 14 (429 aa).

Positions 87 to 113 are disordered; that stretch reads KSEAPINDEKGVSVEASDSSSKPSNGY. The tract at residues 113 to 338 is serine protease; the sequence is YLGRDTIANA…IRPWIGLKMV (226 aa). Catalysis depends on charge relay system residues His165, Asp203, and Ser281. The PDZ domain maps to 318-424; it reads IIEHFKKSGR…RVTLEVIPEE (107 aa).

This sequence belongs to the peptidase S1C family.

Putative serine protease. The sequence is that of Putative protease Do-like 14 (DEGP14) from Arabidopsis thaliana (Mouse-ear cress).